Reading from the N-terminus, the 361-residue chain is MNLIYNFSAGPAMIPRDVLNQAKKELHNWKNLGSSIMEISHRSEEFIQMALEAEKDLRDLLKIPDSFKVLFCQGGARGQFSAIPMNLLNNLQTADYINSGYWSNSAFMEAKKYCTPRSIFIRETNGVKESLLPMHKWNINENSAYIHYCPNETIDGLSIYEEPVFENKIIVGDFSSFILSRSINIKNYDLIYAGAQKNIGPAGITIIIIRKNIIGSSSKMTPSILDYKKISDHHSMFNTPPTFAWYLSGLVFKWLKKQGGLKAIEKLNKKKSDLLYKKIDNSDFYINKINSKHRSQMNVVFHLVNPKLNYIFLKEASKTGLNYLRGHSIVGGMRASLYNAMPLEGVESLVKFMSYFEKRYG.

An L-glutamate-binding site is contributed by Arg-42. Pyridoxal 5'-phosphate-binding positions include 76–77 (AR), Trp-102, Thr-153, Asp-173, and Gln-196. Residue Lys-197 is modified to N6-(pyridoxal phosphate)lysine. 238–239 (NT) is a pyridoxal 5'-phosphate binding site.

The protein belongs to the class-V pyridoxal-phosphate-dependent aminotransferase family. SerC subfamily. In terms of assembly, homodimer. Pyridoxal 5'-phosphate is required as a cofactor.

It is found in the cytoplasm. It carries out the reaction O-phospho-L-serine + 2-oxoglutarate = 3-phosphooxypyruvate + L-glutamate. The enzyme catalyses 4-(phosphooxy)-L-threonine + 2-oxoglutarate = (R)-3-hydroxy-2-oxo-4-phosphooxybutanoate + L-glutamate. Its pathway is amino-acid biosynthesis; L-serine biosynthesis; L-serine from 3-phospho-D-glycerate: step 2/3. It participates in cofactor biosynthesis; pyridoxine 5'-phosphate biosynthesis; pyridoxine 5'-phosphate from D-erythrose 4-phosphate: step 3/5. In terms of biological role, catalyzes the reversible conversion of 3-phosphohydroxypyruvate to phosphoserine and of 3-hydroxy-2-oxo-4-phosphonooxybutanoate to phosphohydroxythreonine. The protein is Phosphoserine aminotransferase of Buchnera aphidicola subsp. Acyrthosiphon pisum (strain Tuc7).